Consider the following 480-residue polypeptide: Aspartyl/glutamyl-tRNA(Asn/Gln) amidotransferase subunit B (480 aa).

It belongs to the GatB/GatE family. GatB subfamily. As to quaternary structure, heterotrimer of A, B and C subunits.

It catalyses the reaction L-glutamyl-tRNA(Gln) + L-glutamine + ATP + H2O = L-glutaminyl-tRNA(Gln) + L-glutamate + ADP + phosphate + H(+). The catalysed reaction is L-aspartyl-tRNA(Asn) + L-glutamine + ATP + H2O = L-asparaginyl-tRNA(Asn) + L-glutamate + ADP + phosphate + 2 H(+). In terms of biological role, allows the formation of correctly charged Asn-tRNA(Asn) or Gln-tRNA(Gln) through the transamidation of misacylated Asp-tRNA(Asn) or Glu-tRNA(Gln) in organisms which lack either or both of asparaginyl-tRNA or glutaminyl-tRNA synthetases. The reaction takes place in the presence of glutamine and ATP through an activated phospho-Asp-tRNA(Asn) or phospho-Glu-tRNA(Gln). The protein is Aspartyl/glutamyl-tRNA(Asn/Gln) amidotransferase subunit B of Streptococcus pneumoniae serotype 2 (strain D39 / NCTC 7466).